The following is a 209-amino-acid chain: COP9 signalosome complex subunit 8 (209 aa).

The 172-residue stretch at 8–179 (DNAFSFRKLL…GALDVSLNRF (172 aa)) folds into the PCI domain. A Phosphoserine modification is found at Ser175.

Belongs to the CSN8 family. Component of the CSN complex, composed of COPS1/GPS1, COPS2, COPS3, COPS4, COPS5, COPS6, COPS7 (COPS7A or COPS7B), COPS8 and COPS9. In the complex, it probably interacts directly with COPS3, COPS4 and COPS7 (COPS7A or COPS7B).

It localises to the cytoplasm. Its subcellular location is the nucleus. Component of the COP9 signalosome complex (CSN), a complex involved in various cellular and developmental processes. The CSN complex is an essential regulator of the ubiquitin (Ubl) conjugation pathway by mediating the deneddylation of the cullin subunits of SCF-type E3 ligase complexes, leading to decrease the Ubl ligase activity of SCF-type complexes such as SCF, CSA or DDB2. The complex is also involved in phosphorylation of p53/TP53, c-jun/JUN, IkappaBalpha/NFKBIA, ITPK1 and IRF8/ICSBP, possibly via its association with CK2 and PKD kinases. CSN-dependent phosphorylation of TP53 and JUN promotes and protects degradation by the Ubl system, respectively. The chain is COP9 signalosome complex subunit 8 (Cops8) from Rattus norvegicus (Rat).